Here is a 173-residue protein sequence, read N- to C-terminus: MNKNCVEVGKITQARGLKGCVVARIEPILESFDPINYIFIKIGHTLVPYQVEEITGQAQQVFIKFQHISDRDSVRELIGSSIWLSQEILDKLVVQEEPYIDIIGYQVTDKYQGELGIIKDIEQFPLHVCLVVDYLDKELLIPYEPALIQDLDHEQKKIIVELPMGFLEAMGCK.

Residues V94 to F166 form the PRC barrel domain.

The protein belongs to the RimM family. In terms of assembly, binds ribosomal protein uS19.

The protein resides in the cytoplasm. Its function is as follows. An accessory protein needed during the final step in the assembly of 30S ribosomal subunit, possibly for assembly of the head region. Essential for efficient processing of 16S rRNA. May be needed both before and after RbfA during the maturation of 16S rRNA. It has affinity for free ribosomal 30S subunits but not for 70S ribosomes. This is Ribosome maturation factor RimM from Amoebophilus asiaticus (strain 5a2).